A 1262-amino-acid chain; its full sequence is ATP-dependent helicase/nuclease subunit A (1262 aa).

The region spanning 5-476 (FSFTPSQDQA…IVLAENFRSM (472 aa)) is the UvrD-like helicase ATP-binding domain. 26–33 (ASAGSGKT) is a binding site for ATP. Residues 515–808 (DTVTSTAELL…SVMTIHGSKG (294 aa)) form the UvrD-like helicase C-terminal domain.

This sequence belongs to the helicase family. AddA subfamily. Heterodimer of AddA and AddB/RexB. Mg(2+) serves as cofactor.

The catalysed reaction is Couples ATP hydrolysis with the unwinding of duplex DNA by translocating in the 3'-5' direction.. It carries out the reaction ATP + H2O = ADP + phosphate + H(+). In terms of biological role, the heterodimer acts as both an ATP-dependent DNA helicase and an ATP-dependent, dual-direction single-stranded exonuclease. Recognizes the chi site generating a DNA molecule suitable for the initiation of homologous recombination. The AddA nuclease domain is required for chi fragment generation; this subunit has the helicase and 3' -&gt; 5' nuclease activities. This Levilactobacillus brevis (strain ATCC 367 / BCRC 12310 / CIP 105137 / JCM 1170 / LMG 11437 / NCIMB 947 / NCTC 947) (Lactobacillus brevis) protein is ATP-dependent helicase/nuclease subunit A.